We begin with the raw amino-acid sequence, 710 residues long: Polyribonucleotide nucleotidyltransferase (710 aa).

Residues aspartate 489 and aspartate 495 each coordinate Mg(2+). Residues 556–615 enclose the KH domain; the sequence is PKIDTIKIDVDKIKVVIGKGGETIDKIIAETGVKIDIDDEGNVSIYSSDQAAIDRTKEII. Positions 625-693 constitute an S1 motif domain; the sequence is GEVYHAKVIR…EKGRVDASMK (69 aa). A disordered region spans residues 691-710; it reads SMKALIPRPPKPEKKEEKHD. Basic and acidic residues predominate over residues 700-710; that stretch reads PKPEKKEEKHD.

This sequence belongs to the polyribonucleotide nucleotidyltransferase family. It depends on Mg(2+) as a cofactor.

The protein localises to the cytoplasm. The enzyme catalyses RNA(n+1) + phosphate = RNA(n) + a ribonucleoside 5'-diphosphate. Involved in mRNA degradation. Catalyzes the phosphorolysis of single-stranded polyribonucleotides processively in the 3'- to 5'-direction. The polypeptide is Polyribonucleotide nucleotidyltransferase (Streptococcus pyogenes serotype M4 (strain MGAS10750)).